Reading from the N-terminus, the 465-residue chain is Glutamate--tRNA ligase (465 aa).

The short motif at 8–18 is the 'HIGH' region element; it reads PSPTGYLHIGG. Residues 236–240 carry the 'KMSKS' region motif; sequence RLSKR. ATP is bound at residue K239.

It belongs to the class-I aminoacyl-tRNA synthetase family. Glutamate--tRNA ligase type 1 subfamily. In terms of assembly, monomer.

The protein localises to the cytoplasm. The catalysed reaction is tRNA(Glu) + L-glutamate + ATP = L-glutamyl-tRNA(Glu) + AMP + diphosphate. Functionally, catalyzes the attachment of glutamate to tRNA(Glu) in a two-step reaction: glutamate is first activated by ATP to form Glu-AMP and then transferred to the acceptor end of tRNA(Glu). This Nitrosospira multiformis (strain ATCC 25196 / NCIMB 11849 / C 71) protein is Glutamate--tRNA ligase.